Consider the following 616-residue polypeptide: Chaperone protein HscA homolog (616 aa).

Belongs to the heat shock protein 70 family.

Its function is as follows. Chaperone involved in the maturation of iron-sulfur cluster-containing proteins. Has a low intrinsic ATPase activity which is markedly stimulated by HscB. The sequence is that of Chaperone protein HscA homolog from Tolumonas auensis (strain DSM 9187 / NBRC 110442 / TA 4).